The following is an 85-amino-acid chain: Putative membrane protein insertion efficiency factor (85 aa).

The disordered stretch occupies residues 62 to 85 (PLGSDGYDPVPEPKDRKPPHSPAG).

Belongs to the UPF0161 family.

The protein localises to the cell inner membrane. Could be involved in insertion of integral membrane proteins into the membrane. This chain is Putative membrane protein insertion efficiency factor, found in Ruegeria pomeroyi (strain ATCC 700808 / DSM 15171 / DSS-3) (Silicibacter pomeroyi).